A 428-amino-acid polypeptide reads, in one-letter code: Light-independent protochlorophyllide reductase subunit N (428 aa).

Positions 31, 56, and 117 each coordinate [4Fe-4S] cluster.

This sequence belongs to the BchN/ChlN family. In terms of assembly, protochlorophyllide reductase is composed of three subunits; BchL, BchN and BchB. Forms a heterotetramer of two BchB and two BchN subunits. Requires [4Fe-4S] cluster as cofactor.

It carries out the reaction chlorophyllide a + oxidized 2[4Fe-4S]-[ferredoxin] + 2 ADP + 2 phosphate = protochlorophyllide a + reduced 2[4Fe-4S]-[ferredoxin] + 2 ATP + 2 H2O. It participates in porphyrin-containing compound metabolism; bacteriochlorophyll biosynthesis (light-independent). Functionally, component of the dark-operative protochlorophyllide reductase (DPOR) that uses Mg-ATP and reduced ferredoxin to reduce ring D of protochlorophyllide (Pchlide) to form chlorophyllide a (Chlide). This reaction is light-independent. The NB-protein (BchN-BchB) is the catalytic component of the complex. The chain is Light-independent protochlorophyllide reductase subunit N from Rhodopseudomonas palustris (strain BisB18).